We begin with the raw amino-acid sequence, 393 residues long: Ribonucleoside-diphosphate reductase subunit M2 (393 aa).

S18 bears the Phosphoserine mark. Positions 142, 173, and 176 each coordinate Fe cation. Y180 is a catalytic residue. Fe cation-binding residues include E236, E270, and H273.

This sequence belongs to the ribonucleoside diphosphate reductase small chain family. Heterodimer of a large and a small subunit. Requires Fe cation as cofactor.

It localises to the cytoplasm. The catalysed reaction is a 2'-deoxyribonucleoside 5'-diphosphate + [thioredoxin]-disulfide + H2O = a ribonucleoside 5'-diphosphate + [thioredoxin]-dithiol. Provides the precursors necessary for DNA synthesis. Catalyzes the biosynthesis of deoxyribonucleotides from the corresponding ribonucleotides. This chain is Ribonucleoside-diphosphate reductase subunit M2 (RnrS), found in Drosophila melanogaster (Fruit fly).